An 857-amino-acid chain; its full sequence is DNA mismatch repair protein MutS (857 aa).

608-615 (GPNMSGKS) contacts ATP.

The protein belongs to the DNA mismatch repair MutS family.

Its function is as follows. This protein is involved in the repair of mismatches in DNA. It is possible that it carries out the mismatch recognition step. This protein has a weak ATPase activity. The chain is DNA mismatch repair protein MutS from Lactobacillus gasseri (strain ATCC 33323 / DSM 20243 / BCRC 14619 / CIP 102991 / JCM 1131 / KCTC 3163 / NCIMB 11718 / NCTC 13722 / AM63).